A 378-amino-acid chain; its full sequence is Protein RecA (378 aa).

Residue 79–86 (GPESSGKT) participates in ATP binding.

This sequence belongs to the RecA family.

The protein resides in the cytoplasm. Its function is as follows. Can catalyze the hydrolysis of ATP in the presence of single-stranded DNA, the ATP-dependent uptake of single-stranded DNA by duplex DNA, and the ATP-dependent hybridization of homologous single-stranded DNAs. It interacts with LexA causing its activation and leading to its autocatalytic cleavage. The sequence is that of Protein RecA from Streptococcus pyogenes serotype M1.